The chain runs to 551 residues: Terpene synthase 10 (551 aa).

Mg(2+)-binding residues include Asp303, Asp307, and Glu455. The short motif at 303-307 is the DDXXD motif element; sequence DDIYD.

It belongs to the terpene synthase family. The cofactor is Mg(2+).

In terms of biological role, catalyzes the cyclization of farnesyl diphosphate to sesquiterpene olefins. This chain is Terpene synthase 10 (TPS10), found in Ricinus communis (Castor bean).